Here is a 102-residue protein sequence, read N- to C-terminus: Neuropeptide F (102 aa).

Positions 1–26 (MCQTMRCILVACVALALLAAGCRVEA) are cleaved as a signal peptide. A propeptide spanning residues 27–32 (SNSRPP) is cleaved from the precursor. Phenylalanine 62 is subject to Phenylalanine amide. Residues 66–102 (GSLMDILRNHEMDNINLGKNANNGGEFARGFNEEEIF) constitute a propeptide that is removed on maturation.

Belongs to the NPY family. Expressed in midgut, brain lobes and ventral nerve cord of larvae. Predominantly expressed in two pairs of protocerebral neurons in the larval CNS (at protein level). Intense expression is also seen in the fan-shaped body of the central complex and two lateral areas of the lower part of the central brain that appear to harbor the giant commissural interneurons of the giant fiber pathway (at protein level). Upon glucose feeding, two additional dNPFergic neurons are consistently detected on the ventromedial surface of the subesophageal ganglion (SEG) of third instars larvae. Expressed in a subset of sugar-responsive PAIN neurons in the thoracic body but is absent from other peripheral PAIN neurons.

The protein localises to the secreted. Its function is as follows. Integral part of the sensory system that mediates food signaling, providing the neural basis for the regulation of food response; coordinates larval foraging and social behavior changes during development. Required in dopaminergic (DA) neurons that innervate the mushroom body for satiety to suppress appetitive memory performance; a key factor in the internal state of hunger in the brain. NPF neurons coordinately modulate diverse sensory and motor neurons important for feeding, flight, and locomotion. NPF/NPFR pathway exerts its suppressive effect on larval aversion to diverse stressful stimuli (chemical stress and noxious heat) through attenuation of TRP channel-induced neuronal excitation. NPF neural signaling system plays a physiological role in acute modulation of alcohol sensitivity in adults, rather than a general response to intoxication by sedative agents. Activation and inhibition of the NPF system reduces and enhances ethanol preference, respectively. Sexual experience, the NPF system activity and ethanol consumption are all linked; sexual deprivation is a major contributor to enhanced ethanol preference. In Drosophila melanogaster (Fruit fly), this protein is Neuropeptide F (NPF).